The sequence spans 1372 residues: DNA-directed RNA polymerase subunit beta (1372 aa).

Belongs to the RNA polymerase beta chain family. The RNAP catalytic core consists of 2 alpha, 1 beta, 1 beta' and 1 omega subunit. When a sigma factor is associated with the core the holoenzyme is formed, which can initiate transcription.

The catalysed reaction is RNA(n) + a ribonucleoside 5'-triphosphate = RNA(n+1) + diphosphate. Functionally, DNA-dependent RNA polymerase catalyzes the transcription of DNA into RNA using the four ribonucleoside triphosphates as substrates. The sequence is that of DNA-directed RNA polymerase subunit beta from Bradyrhizobium sp. (strain BTAi1 / ATCC BAA-1182).